The chain runs to 435 residues: Tektin-4 (435 aa).

Residues 60 to 69 (DQSERQRHES) show a composition bias toward basic and acidic residues. Residues 60 to 96 (DQSERQRHESQQLATETQALAQRTQQDSTRTVGERLQ) form a disordered region. The span at 70–85 (QQLATETQALAQRTQQ) shows a compositional bias: low complexity. Coiled coils occupy residues 102–180 (KSEL…LLKR), 310–336 (LHKT…DKEA), and 363–411 (FRLL…TNSL).

Belongs to the tektin family. In terms of assembly, microtubule inner protein component of sperm flagellar doublet microtubules. In terms of processing, ubiquitinated, leading to its degradation. Deubiquitinated by USP16, promoting its stability. In terms of tissue distribution, strongly expressed in spermatozoa. Also detected at low levels in pancreas. Expressed in airway epithelial cells.

The protein resides in the cytoplasm. The protein localises to the cytoskeleton. It is found in the cilium axoneme. It localises to the flagellum axoneme. Its function is as follows. Microtubule inner protein (MIP) part of the dynein-decorated doublet microtubules (DMTs) in cilia and flagellar axoneme. Forms filamentous polymers in the walls of ciliary and flagellar microtubules. Contributes to normal sperm motility. The protein is Tektin-4 of Homo sapiens (Human).